We begin with the raw amino-acid sequence, 315 residues long: Probable cell division protein WhiA (315 aa).

A DNA-binding region (H-T-H motif) is located at residues 274–308 (SLKNLGELIPGGPISKSGINHRLRKLNEIAEKIRA).

This sequence belongs to the WhiA family.

Its function is as follows. Involved in cell division and chromosome segregation. This Ligilactobacillus salivarius (strain UCC118) (Lactobacillus salivarius) protein is Probable cell division protein WhiA.